Reading from the N-terminus, the 185-residue chain is MAEEKQTPRMKTHYFEVVRKTLQEKFNYKNVMQIPRVDKIVINMGIGEATADSKKPSIAAEDLGLITGQKAVVTRARNSIATFKVREGMPLGAKVTLRKDRMFEFLDRLVTIALPRVRDFRGLNPKSFDGRGNFAMGIKEHIVFPEINYDKVDQIWGMDIIVCTTAKTDDEARELLRAFNFPFRS.

Belongs to the universal ribosomal protein uL5 family. As to quaternary structure, part of the 50S ribosomal subunit; part of the 5S rRNA/L5/L18/L25 subcomplex. Contacts the 5S rRNA and the P site tRNA. Forms a bridge to the 30S subunit in the 70S ribosome.

This is one of the proteins that bind and probably mediate the attachment of the 5S RNA into the large ribosomal subunit, where it forms part of the central protuberance. In the 70S ribosome it contacts protein S13 of the 30S subunit (bridge B1b), connecting the 2 subunits; this bridge is implicated in subunit movement. Contacts the P site tRNA; the 5S rRNA and some of its associated proteins might help stabilize positioning of ribosome-bound tRNAs. The polypeptide is Large ribosomal subunit protein uL5 (Bartonella henselae (strain ATCC 49882 / DSM 28221 / CCUG 30454 / Houston 1) (Rochalimaea henselae)).